Consider the following 729-residue polypeptide: MLYKGDTLYLDWLEDGIAELVFDAPGSVNKLDTATVASLGQALEVLEKQHDLKGLLLRSNKAAFIVGADITEFLSLFLVPEEQLSQWLHFANSVFNRLEDLPVPTLAAVNGYALGGGCECVLATDYRLATPDLRIGLPETKLGIMPGFGGSVRLPRMLGADSALEIIAAGKDVGAEHALKIGLVDGVVKQEKLIEGAIAVLRQAITGDLDWRAKRQPKLEPLKLSKIEAAMSFTIAKGMVAQTAGKHYPAPMTAVKTIEAAARFGREEALNLENKSFVPLAHTNEARALVGIFLNDQYVKGKAKKLTKDIETPKQAAVLGAGIMGGGIAYQSAWKGVPVIMKDINDKSLNLGMTEAAKLLNKQLERGKIGGLKLAGVISTIHPTLDYAGFDRVDVVVEAVVENPKVKKAVLAETEQKVRPETVLASNTSTIPIGELASALERPENFCGMHFFNPVHRMPLVEIIRGEKSSDETIAKVVAWASKMGKTPIVVNDCPGFFVNRVLFPYFAGFSQLLRDGADFRKVDKVMEKQFGWPMGPAYLLDVVGIDTAHHAQAVMAAGFPQRMQKEYRDAIDALFDASRFGQKNGLGFWRYKEDSKGKPKKEEDAAVDDLLASVSQPKRDFSDDEIIARMMIPMINEVVRCLEEGIIASPAEADMALVYGLGFPPFHGGAFRWLDTQGSAKYLDMAQQYQHLGPLYEVPEGLRDKARHNEPYYPPVEPARPVGSLKTA.

The enoyl-CoA hydratase/isomerase stretch occupies residues 1–189 (MLYKGDTLYL…KIGLVDGVVK (189 aa)). Substrate is bound at residue D296. Residues 311-729 (ETPKQAAVLG…ARPVGSLKTA (419 aa)) form a 3-hydroxyacyl-CoA dehydrogenase region. Residues M324, D343, 400-402 (VVE), K407, and S429 each bind NAD(+). H450 serves as the catalytic For 3-hydroxyacyl-CoA dehydrogenase activity. N453 serves as a coordination point for NAD(+). Residues N500 and Y660 each contribute to the substrate site. A disordered region spans residues 708–729 (RHNEPYYPPVEPARPVGSLKTA).

The protein in the N-terminal section; belongs to the enoyl-CoA hydratase/isomerase family. It in the C-terminal section; belongs to the 3-hydroxyacyl-CoA dehydrogenase family. In terms of assembly, heterotetramer of two alpha chains (FadB) and two beta chains (FadA).

It catalyses the reaction a (3S)-3-hydroxyacyl-CoA + NAD(+) = a 3-oxoacyl-CoA + NADH + H(+). The enzyme catalyses a (3S)-3-hydroxyacyl-CoA = a (2E)-enoyl-CoA + H2O. It carries out the reaction a 4-saturated-(3S)-3-hydroxyacyl-CoA = a (3E)-enoyl-CoA + H2O. The catalysed reaction is (3S)-3-hydroxybutanoyl-CoA = (3R)-3-hydroxybutanoyl-CoA. It catalyses the reaction a (3Z)-enoyl-CoA = a 4-saturated (2E)-enoyl-CoA. The enzyme catalyses a (3E)-enoyl-CoA = a 4-saturated (2E)-enoyl-CoA. The protein operates within lipid metabolism; fatty acid beta-oxidation. Functionally, involved in the aerobic and anaerobic degradation of long-chain fatty acids via beta-oxidation cycle. Catalyzes the formation of 3-oxoacyl-CoA from enoyl-CoA via L-3-hydroxyacyl-CoA. It can also use D-3-hydroxyacyl-CoA and cis-3-enoyl-CoA as substrate. This Salmonella agona (strain SL483) protein is Fatty acid oxidation complex subunit alpha.